Reading from the N-terminus, the 410-residue chain is Na(+)/H(+) antiporter NhaA 1/4 (410 aa).

The next 11 membrane-spanning stretches (helical) occupy residues 16–36 (VGGS…NSPL), 55–75 (LNLS…FFIV), 95–115 (ALPI…FLAF), 125–145 (GGWG…LAVV), 156–176 (FLLT…AVAC), 178–198 (SGIN…FGYL), 215–235 (AWLL…ACGV), 275–295 (IALP…AGGF), 299–319 (AITW…IFGG), 340–360 (IAGI…IAEL), and 371–391 (AKGA…LLLG).

It belongs to the NhaA Na(+)/H(+) (TC 2.A.33) antiporter family.

Its subcellular location is the cell membrane. The catalysed reaction is Na(+)(in) + 2 H(+)(out) = Na(+)(out) + 2 H(+)(in). Functionally, na(+)/H(+) antiporter that extrudes sodium in exchange for external protons. This chain is Na(+)/H(+) antiporter NhaA 1/4, found in Streptomyces coelicolor (strain ATCC BAA-471 / A3(2) / M145).